The sequence spans 118 residues: MRAKWLWMTAVGSLLITVLTAWGWAAASSQDSKIVYVFSDSCGYCQTFRPTLETVLQEYPQTSVERLDIREERDLKEALRLGAEATPTIFVVRDGTVMDKLEGDVAEAVLRSFFQKKS.

The signal sequence occupies residues 1 to 27; that stretch reads MRAKWLWMTAVGSLLITVLTAWGWAAA. The region spanning 28 to 114 is the Thioredoxin domain; the sequence is SSQDSKIVYV…VAEAVLRSFF (87 aa). Cysteine 42 and cysteine 45 are joined by a disulfide.

The protein belongs to the thioredoxin family.

The protein localises to the secreted. Stimulates the oxidation and reduction of disulfide bonds in vitro. This chain is Disulfide bond formation protein (bdb), found in Brevibacillus choshinensis.